A 413-amino-acid polypeptide reads, in one-letter code: Glucose-1-phosphate adenylyltransferase (413 aa).

Alpha-D-glucose 1-phosphate is bound by residues Gly163, 179-180 (EK), and Ser197.

Belongs to the bacterial/plant glucose-1-phosphate adenylyltransferase family. Homotetramer.

It carries out the reaction alpha-D-glucose 1-phosphate + ATP + H(+) = ADP-alpha-D-glucose + diphosphate. It functions in the pathway glycan biosynthesis; glycogen biosynthesis. Functionally, involved in the biosynthesis of ADP-glucose, a building block required for the elongation reactions to produce glycogen. Catalyzes the reaction between ATP and alpha-D-glucose 1-phosphate (G1P) to produce pyrophosphate and ADP-Glc. This chain is Glucose-1-phosphate adenylyltransferase, found in Parafrankia sp. (strain EAN1pec).